A 111-amino-acid chain; its full sequence is Cell cycle protein GpsB (111 aa).

A coiled-coil region spans residues 38–72 (IKDYEAFHKEFDQLKQQNARLKRELEEQKVAATQV).

This sequence belongs to the GpsB family. In terms of assembly, forms polymers through the coiled coil domains. Interacts with PBP1, MreC and EzrA.

The protein localises to the cytoplasm. Divisome component that associates with the complex late in its assembly, after the Z-ring is formed, and is dependent on DivIC and PBP2B for its recruitment to the divisome. Together with EzrA, is a key component of the system that regulates PBP1 localization during cell cycle progression. Its main role could be the removal of PBP1 from the cell pole after pole maturation is completed. Also contributes to the recruitment of PBP1 to the division complex. Not essential for septum formation. The chain is Cell cycle protein GpsB from Bacillus mycoides (strain KBAB4) (Bacillus weihenstephanensis).